A 403-amino-acid polypeptide reads, in one-letter code: Phosphoglycerate kinase (403 aa).

Residues aspartate 22–asparagine 24, arginine 37, histidine 60–arginine 63, arginine 119, and arginine 156 contribute to the substrate site. ATP-binding positions include lysine 206, glycine 302, glutamate 333, and glycine 359 to serine 362.

The protein belongs to the phosphoglycerate kinase family. As to quaternary structure, monomer.

The protein resides in the cytoplasm. The enzyme catalyses (2R)-3-phosphoglycerate + ATP = (2R)-3-phospho-glyceroyl phosphate + ADP. It functions in the pathway carbohydrate degradation; glycolysis; pyruvate from D-glyceraldehyde 3-phosphate: step 2/5. In Streptomyces griseus subsp. griseus (strain JCM 4626 / CBS 651.72 / NBRC 13350 / KCC S-0626 / ISP 5235), this protein is Phosphoglycerate kinase.